Reading from the N-terminus, the 179-residue chain is ATP synthase subunit delta 2 (179 aa).

It belongs to the ATPase delta chain family. In terms of assembly, F-type ATPases have 2 components, F(1) - the catalytic core - and F(0) - the membrane proton channel. F(1) has five subunits: alpha(3), beta(3), gamma(1), delta(1), epsilon(1). F(0) has three main subunits: a(1), b(2) and c(10-14). The alpha and beta chains form an alternating ring which encloses part of the gamma chain. F(1) is attached to F(0) by a central stalk formed by the gamma and epsilon chains, while a peripheral stalk is formed by the delta and b chains.

Its subcellular location is the cell inner membrane. Functionally, f(1)F(0) ATP synthase produces ATP from ADP in the presence of a proton or sodium gradient. F-type ATPases consist of two structural domains, F(1) containing the extramembraneous catalytic core and F(0) containing the membrane proton channel, linked together by a central stalk and a peripheral stalk. During catalysis, ATP synthesis in the catalytic domain of F(1) is coupled via a rotary mechanism of the central stalk subunits to proton translocation. In terms of biological role, this protein is part of the stalk that links CF(0) to CF(1). It either transmits conformational changes from CF(0) to CF(1) or is implicated in proton conduction. In Syntrophotalea carbinolica (strain DSM 2380 / NBRC 103641 / GraBd1) (Pelobacter carbinolicus), this protein is ATP synthase subunit delta 2.